Here is a 263-residue protein sequence, read N- to C-terminus: Small ribosomal subunit protein uS2 (263 aa).

The interval 228–263 (QLEEPEADLADEDDNGMTTSDDGDAEALDIPDDSDA) is disordered. A compositionally biased stretch (acidic residues) spans 230-263 (EEPEADLADEDDNGMTTSDDGDAEALDIPDDSDA).

Belongs to the universal ribosomal protein uS2 family.

This chain is Small ribosomal subunit protein uS2, found in Thermosynechococcus vestitus (strain NIES-2133 / IAM M-273 / BP-1).